The following is a 181-amino-acid chain: MIQPLFLVGPRGCGKTTVGKALADALERRFVDTDQWLQANVQMTVADIVEREGWAGFRAREAAALEAVTAPATVVATGGGIILAEQNRHFMRNNGIVIYLSAPVDVLVNRLEAEPEVGLRPTLTGKSLSEEVAEVLEQRDILYRETANIIVDATYEPGQVISEIRALLDQMALRNLGGAYT.

Residue 12 to 17 (GCGKTT) coordinates ATP. 2 residues coordinate Mg(2+): Thr-16 and Asp-32. Substrate is bound by residues Asp-34, Arg-58, and Gly-79. An LID domain region spans residues 112 to 126 (EAEPEVGLRPTLTGK). Arg-120 lines the ATP pocket. Arg-139 contributes to the substrate binding site.

It belongs to the shikimate kinase family. AroL subfamily. As to quaternary structure, monomer. Mg(2+) is required as a cofactor.

It is found in the cytoplasm. The catalysed reaction is shikimate + ATP = 3-phosphoshikimate + ADP + H(+). Its pathway is metabolic intermediate biosynthesis; chorismate biosynthesis; chorismate from D-erythrose 4-phosphate and phosphoenolpyruvate: step 5/7. Functionally, catalyzes the specific phosphorylation of the 3-hydroxyl group of shikimic acid using ATP as a cosubstrate. This is Shikimate kinase 2 from Escherichia fergusonii (strain ATCC 35469 / DSM 13698 / CCUG 18766 / IAM 14443 / JCM 21226 / LMG 7866 / NBRC 102419 / NCTC 12128 / CDC 0568-73).